Consider the following 432-residue polypeptide: Tol-Pal system protein TolB (432 aa).

The signal sequence occupies residues 1–29; it reads MMRNVWKSGLRRSAWIGLLMVLCVGVARA.

It belongs to the TolB family. As to quaternary structure, the Tol-Pal system is composed of five core proteins: the inner membrane proteins TolA, TolQ and TolR, the periplasmic protein TolB and the outer membrane protein Pal. They form a network linking the inner and outer membranes and the peptidoglycan layer.

It localises to the periplasm. In terms of biological role, part of the Tol-Pal system, which plays a role in outer membrane invagination during cell division and is important for maintaining outer membrane integrity. This is Tol-Pal system protein TolB from Ralstonia nicotianae (strain ATCC BAA-1114 / GMI1000) (Ralstonia solanacearum).